We begin with the raw amino-acid sequence, 260 residues long: Putative enoyl-CoA hydratase/isomerase YngF (260 aa).

The protein belongs to the enoyl-CoA hydratase/isomerase family.

This Bacillus subtilis (strain 168) protein is Putative enoyl-CoA hydratase/isomerase YngF (yngF).